Reading from the N-terminus, the 136-residue chain is Piercer of microtubule wall 1 protein (136 aa).

Residues 1–24 are disordered; the sequence is MAEECPRACAEPVAPKATAPPERT.

The protein belongs to the PIERCE1 family. In terms of assembly, microtubule inner protein component of sperm flagellar doublet microtubules. Interacts with CFAP53, ODAD1 and ODAD3; the interactions link the outer dynein arms docking complex (ODA-DC) to the internal microtubule inner proteins (MIP) in cilium axoneme. Expressed in airway epithelial cells.

The protein localises to the cytoplasm. It is found in the cytoskeleton. It localises to the cilium axoneme. The protein resides in the flagellum axoneme. Functionally, microtubule inner protein involved in the attachment of outer dynein arms (ODAs) to dynein-decorated doublet microtubules (DMTs) in cilia axoneme, which is required for motile cilia beating. Functions at the initial step of left-right asymmetry specification of the visceral organs. This chain is Piercer of microtubule wall 1 protein, found in Homo sapiens (Human).